Here is a 638-residue protein sequence, read N- to C-terminus: Probable potassium transport system protein Kup (638 aa).

Residues 1 to 20 (MQVEHEVATEGGQAPASSGH) form a disordered region. The next 12 membrane-spanning stretches (helical) occupy residues 24–44 (IAGL…TSPL), 67–87 (ILSL…VVFI), 115–135 (AWWL…DGMI), 153–173 (PAFK…LFVM), 181–201 (VGAI…VLGI), 228–248 (LIGW…EALY), 263–283 (WFSL…ALIL), 301–321 (LVYP…QAVI), 353–373 (IYVP…VVGF), 382–402 (AYGI…FVVV), 413–433 (AVLF…ATTV), and 435–455 (IFAG…LLRT).

Belongs to the HAK/KUP transporter (TC 2.A.72) family.

The protein localises to the cell inner membrane. The enzyme catalyses K(+)(in) + H(+)(in) = K(+)(out) + H(+)(out). Functionally, transport of potassium into the cell. Likely operates as a K(+):H(+) symporter. This chain is Probable potassium transport system protein Kup, found in Azoarcus sp. (strain BH72).